A 113-amino-acid polypeptide reads, in one-letter code: Hydrogenase maturation factor HypA (113 aa).

His-2 serves as a coordination point for Ni(2+). The Zn(2+) site is built by Cys-73, Cys-76, Cys-89, and Cys-92.

The protein belongs to the HypA/HybF family.

Its function is as follows. Involved in the maturation of [NiFe] hydrogenases. Required for nickel insertion into the metal center of the hydrogenase. The sequence is that of Hydrogenase maturation factor HypA from Rhodobacter capsulatus (Rhodopseudomonas capsulata).